The primary structure comprises 560 residues: Nuclear receptor subfamily 5 group A member 2 (560 aa).

Residues 21–55 form a disordered region; sequence IASAPGSETRHSPKREEQLREKRAGLPDRHRRPIP. Residues 28–48 are compositionally biased toward basic and acidic residues; it reads ETRHSPKREEQLREKRAGLPD. The nuclear receptor DNA-binding region spans 104–175; sequence EELCPVCGDK…KCIDVGMKLE (72 aa). 8 residues coordinate Zn(2+): cysteine 107, cysteine 110, cysteine 124, cysteine 127, cysteine 143, cysteine 149, cysteine 159, and cysteine 162. NR C4-type zinc fingers lie at residues 107–127 and 143–167; these read CPVCGDKVSGYHYGLLTCESC and CIENQNCQIDKTQRKRCPYCRFKKC. The tract at residues 173-188 is C-terminal extension (CTE); it reads KLEAVRADRMRGGRNK. An FTZ-F1 box motif is present at residues 189–208; that stretch reads FGPMYKRDRALKQQKKALIR. Lysine 289 participates in a covalent cross-link: Glycyl lysine isopeptide (Lys-Gly) (interchain with G-Cter in SUMO1). The region spanning 319–558 is the NR LBD domain; it reads SIPHLILELL…NLLIEMLHAK (240 aa). A phospholipid derivative is bound by residues tyrosine 535 and lysine 539. Positions 547–558 are AF-2; the sequence is YNNLLIEMLHAK.

The protein belongs to the nuclear hormone receptor family. NR5 subfamily. As to quaternary structure, monomer; Binds DNA as a monomer. Interacts with nuclear receptor corepressors NR0B1 and NR0B2; repressing NR5A2 nuclear receptor activity. Interacts with nuclear receptor coactivators CTNNB1, PPARGC1A and NCOA2; interaction takes place following ligand-binding and promotes target gene activation. Interacts (when sumoylated) with GPS2; interaction with GPS2 onto hepatic acute phase protein promoters prevents N-Cor corepressor complex dissociation. Interacts with HNF1A. Interacts with GRIP1. In terms of processing, sumoylated by SUMO1 at Lys-289 during the hepatic acute phase response, leading to promote interaction with GPS2 and prevent N-Cor corepressor complex dissociation.

The protein resides in the nucleus. The protein localises to the chromosome. Functionally, orphan nuclear receptor that binds DNA as a monomer to the 5'-TCAAGGCCA-3' sequence and controls expression of target genes: regulates key biological processes, such as early embryonic development, cholesterol and bile acid synthesis pathways, as well as liver and pancreas morphogenesis. Ligand-binding causes conformational change which causes recruitment of coactivators, promoting target gene activation. The specific ligand is unknown, but specific phospholipids, such as phosphatidylethanolamine, phosphatidylserine, dilauroyl phosphatidylcholine and diundecanoyl phosphatidylcholine can act as ligand in vitro. Acts as a pioneer transcription factor, which unwraps target DNA from histones and elicits local opening of closed chromatin. Plays a central role during preimplantation stages of embryonic development. Plays a minor role in zygotic genome activation (ZGA) by regulating a small set of two-cell stage genes. Plays a major role in morula development (2-16 cells embryos) by acting as a master regulator at the 8-cell stage, controlling expression of lineage-specifying transcription factors and genes involved in mitosis, telomere maintenance and DNA repair. Zygotic NR5A2 binds to both closed and open chromatin with other transcription factors, often at SINE B1/Alu repeats DNA elements, promoting chromatin accessibility at nearby regulatory regions. Also involved in the epiblast stage of development and embryonic stem cell pluripotency, by promoting expression of POU5F1/OCT4. Regulates other processes later in development, such as formation of connective tissue in lower jaw and middle ear, neural stem cell differentiation, ovarian follicle development and Sertoli cell differentiation. Involved in exocrine pancreas development and acinar cell differentiation. Acts as an essential transcriptional regulator of lipid metabolism. Key regulator of cholesterol 7-alpha-hydroxylase gene (CYP7A) expression in liver. Activates the transcription of CYP2C38. Also acts as a negative regulator of inflammation in different organs, such as intestine, liver and pancreas. Protects against intestinal inflammation via its ability to regulate glucocorticoid production. Plays an anti-inflammatory role during the hepatic acute phase response by acting as a corepressor: inhibits the hepatic acute phase response by preventing dissociation of the N-Cor corepressor complex. Acts as a regulator of immunity by promoting lymphocyte T-cell development, proliferation and effector functions. Also involved in resolution of endoplasmic reticulum stress in the liver. The chain is Nuclear receptor subfamily 5 group A member 2 from Mus musculus (Mouse).